A 413-amino-acid polypeptide reads, in one-letter code: Ribulose bisphosphate carboxylase large chain (413 aa).

Asparagine 100 and threonine 150 together coordinate substrate. Residue lysine 152 is the Proton acceptor of the active site. Lysine 154 serves as a coordination point for substrate. Residues lysine 178, aspartate 180, and glutamate 181 each contribute to the Mg(2+) site. Lysine 178 is modified (N6-carboxylysine). Histidine 271 serves as the catalytic Proton acceptor. Residues arginine 272, histidine 304, and serine 356 each contribute to the substrate site.

This sequence belongs to the RuBisCO large chain family. Type I subfamily. In terms of assembly, heterohexadecamer of 8 large chains and 8 small chains; disulfide-linked. The disulfide link is formed within the large subunit homodimers. Mg(2+) serves as cofactor. The disulfide bond which can form in the large chain dimeric partners within the hexadecamer appears to be associated with oxidative stress and protein turnover.

It localises to the plastid. It is found in the chloroplast. It carries out the reaction 2 (2R)-3-phosphoglycerate + 2 H(+) = D-ribulose 1,5-bisphosphate + CO2 + H2O. The catalysed reaction is D-ribulose 1,5-bisphosphate + O2 = 2-phosphoglycolate + (2R)-3-phosphoglycerate + 2 H(+). Its function is as follows. RuBisCO catalyzes two reactions: the carboxylation of D-ribulose 1,5-bisphosphate, the primary event in carbon dioxide fixation, as well as the oxidative fragmentation of the pentose substrate in the photorespiration process. Both reactions occur simultaneously and in competition at the same active site. In Adiantum pedatum (Northern maidenhair fern), this protein is Ribulose bisphosphate carboxylase large chain (rbcL).